Consider the following 2885-residue polypeptide: MTDPMMDFFDDANLFGETLEGLSDDTFVQPGPVSLVDELNLGAEFEPLHIDSLNHVQGTPTHQKMADFEQLSQFDSMKFHPVNQSFGSPVEHVLSPHSQFNCSPIHPPNQPNGLFQDVADGSPMWGHQTATGLANQNGSPFHQPGHSHSLHQNKSFVAHPDFALFQASEHQTQCSSLHSQQSRSNLNPGQNSLGQAKNFLDANVSGAHRVNVNHLATAPSSQQTLPVQFSPTANPPAHFLKCSSHQEGNYNRPSPSMTSCSVSNSQQFPSHYSFSSGHVSPSSLLQSSAGLAPGHTNQALSDFAGSNSFSPHRGMKQEPTQHLLNPTPSLNSNNFQILHSSHPQGNYSNSKLSPVHMNFPDPVDAGPPVGHFNDHAETNGFSSLEENLLHHVDSHAEPFAGLDPEDLLQEGLLPQFDESPFGQDNSNHVLDHDLDRQFTSHLVSRPSDMAQTQLQYQARGWPSPLSTNHQHLHSRNHLCLQRQPPSSKKSDGSGTYTKLQNTQVRVMSEKKPRKRVESESKQEKANRIISEAIARAKERGERNIPRVMSPENFPSASVEGKEEKRGRRMKSKPKDRDNKKPKTYSKLKEKTKIGKLIITLGKKHKRRNESSDELSDAEQRSQHTFKEQHSQKRRSNRQIKRKKYAEDAEGKQSEEEVKGSLRVKRNSAPPPGEQPLQLFVENPSEEDAAIVDKILACRTVKKEVSPGVMLDIEEFFVKYKNYSYLHCEWATEQQLLKDKRIQQKIKRFKLRQAQRAHFLADMEEEPFNPDYVEVDRILEVSFCEDKDTGESVIYYLVKWCSLPYEDSTWELKEDVDLAKIEEFEQLQASRPDTRHLDRPPSNIWKKIEQSREYKNGNQLREYQLEGLNWLLFNWYNRRNCILADEMGLGKTIQSITFLYEILLTGIRGPFLIIAPLSTIANWEREFRTWTDINVVVYHGSLISRQMIQQYEMYFRDSQGRIIRGAYRFQAIITTFEMILGGCGELNAIDWRCVIIDEAHRLKNKNCKLLEGLKLMNLEHKVLLTGTPLQNTVEELFSLLHFLEPLRFPSESTFMQEFGDLKTEEQVQKLQAILKPMMLRRLKEDVEKKLAPKEETIIEVELTNIQKKYYRAILEKNFSFLSKGAGQTNVPNLVNTMMELRKCCNHPYLIKGAEEKILGEFRDTYNPSASDFHLQAMIQSAGKLVLIDKLLPKMKAGGHKVLIFSQMVRCLDILEDYLIHKRYLYERIDGRVRGNLRQAAIDRFSKPDSDRFVFLLCTRAGGLGINLTAADTCIIFDSDWNPQNDLQAQARCHRIGQNKAVKVYRLVTRNSYEREMFDRASLKLGLDKAVLQSMSGRDSNVSGIQQLSKKEIEDLLRRGAYGAIMEEEDEGSKFCEEDIDQILLRRTKTITIESEGRGSTFAKASFVASGNRTDISLDDPNFWQKWAKKAELDIDTISGRNSLVIDTPRIRKQTRPFSATKDELAELSEAESEGEEKPKLRRPCDRSGGYGRTECFRVEKNLLVYGWGRWREILSHGRFKRQLNEHDVEVICRALLAYCLIHYRGDEKIKGFIWDLITPTEDGQTRELQNHLGLSAPVPRGRKGKKVKTQTSSFDIQKAEWLRKYNPEQLLQDEGYKKHVKHHCNKVLLRVRMLYYLKQEVIGNESQKVFDGVDASDIDVWVPEPDHSEVPAAWWDFDADKSLLIGVFKHGYEKYNTIRADPALCFLERVGKPDDKAVAAEQRANDYMDGDVEDPEYKPAPAIFKDDIEDDVSSPGDLVIADGEGQLMEGDKVYWPTPSALTTRLRRLITAYQRTNKNRHIQQMQPTFSLPANAMQPLYEEATLNPKMAAKIERQQRWTRREEADFYRVVSTFGVVFDPDRGQFDWTKFRALARLHKKTDNSLEKYLCAFMSMCRRVCRLPSKEELVDPNIFIQPITEERASRTLYRIELLRKVREQALRHPQLFERLKLCHPNPDLPIWWECGSHDRDLLIGAAKHGVSRTDYHILRDPELSFMAAQRNYNQSKAAHSRTSAPLLQQYQVALSASPLTSLPRLLGAKGTLLEDMKVKSESLTEEPQSSEEESMSSMETRTRVKSEPVSPKNGVLSQATGDQKSGGKSETDRRMVAARTEPLTPNPASKKPRVHKRGSQSSSDSDSDSARSSCSSRSSSSSSSSSSCSHSRSGSSSSSSSSCSSASSSSSSSSSSSSSSSSSSSEESDSEEDVQKREGTPHRKAYDEESVASLSTTQDETQDSFQANNGTPESAYLLQGGYMLAASYWPKDRVMINRLDSICQTVLKGKWPSARRHYDANTVASFYTTKLLDSPGAATERGEPSVPTPPAVAVREEHEQSAQMSKVKKHVREKEFTVKIKDEGGLKLTFQKQGLAQKRPFDGEDGALGQQQYLTRLRELQSTSETSLVNLPKAVPASGTSIQPTLGANGAILDSQPIVKKRRGRRRNVEGADILFLNRNKPPNHIPTGMNPALSYPQPQRIPDTESPVPVINLKDGTRLAGDDAPKRKDLDRWLKEHPGYVEDLGAFIPRVQLHEGRPKQKRHRCRNPNKLDINSLTGEERVQLINRRNARKVGGAFAPPLKDLCRFLKENSEYGVAPEWGDVVKQSGFLPESMFERILTGPVVREEVSRRGRRPKSGIAKATTAAAVPAGSVPGNPLLANGLLPGVDLTALQALQQNLQNLQSLQVTAGLMGMPAGLSSGGETKNMAAMFPMLFSGMAGLPNLLGMGGLLSKTAESGAEEKRGNDSKELEGKKERTESQSPENGGERCVPGSPSTSSTAALSSAAAAKPIALNPLLLSNILYPGMLLTPGLNLHLPTLSQSNAFDVQKNKSDDLDSSKSVEIKEENSRVRDQEEKGGTEPSPLNENSTDEGSERASSGSDSSSSSSEDSDSSNED.

A disordered region spans residues Gln-173–Gln-195. Lys-197 is covalently cross-linked (Glycyl lysine isopeptide (Lys-Gly) (interchain with G-Cter in SUMO2)). 3 disordered regions span residues Cys-242–Ser-263, Ser-283–Tyr-347, and Cys-479–Gln-677. Composition is skewed to polar residues over residues Ser-243–Ser-263 and Ser-283–Ser-310. Residues Leu-323 to Asn-334 show a composition bias toward low complexity. Polar residues-rich tracts occupy residues Phe-335–Tyr-347 and Gln-483–Arg-505. Lys-498 is subject to N6-acetyllysine. Composition is skewed to basic and acidic residues over residues Met-507–Asn-526 and Ala-534–Ile-544. Ser-549 carries the phosphoserine modification. Residues Lys-572–Lys-592 show a composition bias toward basic and acidic residues. Lys-595 is covalently cross-linked (Glycyl lysine isopeptide (Lys-Gly) (interchain with G-Cter in SUMO2)). Ser-610 bears the Phosphoserine mark. Residues Ala-617 to Ser-630 are compositionally biased toward basic and acidic residues. Positions Gln-631–Lys-643 are enriched in basic residues. The span at Tyr-644–Gly-659 shows a compositional bias: basic and acidic residues. Chromo domains are found at residues Ala-689–Ala-760 and Val-772–Arg-838. Residues Leu-867 to Leu-871 carry the LXXLL motif 1 motif. One can recognise a Helicase ATP-binding domain in the interval Leu-871–Leu-1045. Position 884-891 (Asp-884–Thr-891) interacts with ATP. The short motif at Asp-996–His-999 is the DEAH box element. The LXXLL motif 2 motif lies at Leu-1035–Leu-1039. The Helicase C-terminal domain occupies Leu-1185–Arg-1336. The segment at Lys-1460 to Asp-1484 is disordered. A compositionally biased stretch (acidic residues) spans Ala-1464 to Gly-1473. A phosphoserine mark is found at Ser-1467 and Ser-1471. Positions Glu-1474–Asp-1484 are enriched in basic and acidic residues. Residues Lys-1587, Lys-1737, and Lys-1902 each participate in a glycyl lysine isopeptide (Lys-Gly) (interchain with G-Cter in SUMO2) cross-link. Ser-2025 carries the phosphoserine modification. An LXXLL motif 3 motif is present at residues Leu-2030–Leu-2034. Residue Lys-2037 forms a Glycyl lysine isopeptide (Lys-Gly) (interchain with G-Cter in SUMO2) linkage. The segment at Val-2046–Gly-2238 is disordered. Ser-2057 and Ser-2058 each carry phosphoserine. Residue Lys-2073 forms a Glycyl lysine isopeptide (Lys-Gly) (interchain with G-Cter in SUMO2) linkage. Phosphoserine is present on residues Ser-2074 and Ser-2078. Residues Val-2083–Lys-2092 are compositionally biased toward polar residues. Residues Ser-2093 to Met-2103 show a composition bias toward basic and acidic residues. Residues Ser-2127 to Ser-2193 show a composition bias toward low complexity. A compositionally biased stretch (basic and acidic residues) spans Asp-2201–Asp-2215. Residues Ala-2220–Gly-2238 show a composition bias toward polar residues. Positions Gln-2331–Pro-2471 are binds A/T-rich DNA. Residues Lys-2349, Lys-2355, and Lys-2360 each participate in a glycyl lysine isopeptide (Lys-Gly) (interchain with G-Cter in SUMO2) cross-link. Residues Lys-2428–Arg-2435 form an a.T hook-like region. The segment at Thr-2473 to Pro-2494 is disordered. Residues Asp-2484–Pro-2494 are compositionally biased toward basic and acidic residues. The LXXLL motif 4 signature appears at Leu-2710–Leu-2714. The tract at residues Ala-2724–Ala-2770 is disordered. Residues Ala-2728–Glu-2747 are compositionally biased toward basic and acidic residues. The LXXLL motif 5 signature appears at Leu-2782–Leu-2786. Basic and acidic residues predominate over residues Lys-2818–Gly-2847. Residues Lys-2818–Asp-2885 are disordered. A Glycyl lysine isopeptide (Lys-Gly) (interchain with G-Cter in SUMO2) cross-link involves residue Lys-2833. The span at Arg-2864–Ser-2876 shows a compositional bias: low complexity.

It belongs to the SNF2/RAD54 helicase family. In terms of assembly, interacts with PPARA. Probably interacts with ESR1 and NR1I3. Phosphorylated on serine and tyrosine residues. Expressed in osteoprogenitor cells during development and in mature bone (at protein level).

Its subcellular location is the cytoplasm. It is found in the nucleus. The enzyme catalyses ATP + H2O = ADP + phosphate + H(+). Functionally, probable ATP-dependent chromatin-remodeling factor. Acts as a transcriptional coactivator for PPARA and possibly other nuclear receptors. Has DNA-dependent ATPase activity and binds to A/T-rich DNA. Associates with A/T-rich regulatory regions in promoters of genes that participate in the differentiation of progenitors during osteogenesis. This chain is Chromodomain-helicase-DNA-binding protein 9 (Chd9), found in Mus musculus (Mouse).